The following is a 401-amino-acid chain: Phosphoglycerate kinase (401 aa).

Residues 21–23 (DFN), R36, 59–62 (HLGR), R119, and R160 contribute to the substrate site. Residues K212, E330, and 357-360 (GGDS) contribute to the ATP site.

This sequence belongs to the phosphoglycerate kinase family. Monomer.

It localises to the cytoplasm. It carries out the reaction (2R)-3-phosphoglycerate + ATP = (2R)-3-phospho-glyceroyl phosphate + ADP. It functions in the pathway carbohydrate degradation; glycolysis; pyruvate from D-glyceraldehyde 3-phosphate: step 2/5. The protein is Phosphoglycerate kinase of Limosilactobacillus reuteri subsp. reuteri (strain JCM 1112) (Lactobacillus reuteri).